The primary structure comprises 131 residues: Glycine cleavage system H protein (131 aa).

Residues 24–106 (RVTVGISDHA…YGEGWIFVVE (83 aa)) enclose the Lipoyl-binding domain. Lys65 carries the N6-lipoyllysine modification.

Belongs to the GcvH family. In terms of assembly, the glycine cleavage system is composed of four proteins: P, T, L and H. (R)-lipoate is required as a cofactor.

In terms of biological role, the glycine cleavage system catalyzes the degradation of glycine. The H protein shuttles the methylamine group of glycine from the P protein to the T protein. This Xanthomonas euvesicatoria pv. vesicatoria (strain 85-10) (Xanthomonas campestris pv. vesicatoria) protein is Glycine cleavage system H protein.